Reading from the N-terminus, the 128-residue chain is uncharacterized protein (128 aa).

Residues 1 to 50 (MSNEQGKGMGFFGNKGKPASEKKDEKKTKLDLDYKPDLNPSTPYDPTLPV) are disordered. Basic and acidic residues predominate over residues 18–36 (PASEKKDEKKTKLDLDYKP).

This is an uncharacterized protein from Bacillus anthracis.